Here is a 291-residue protein sequence, read N- to C-terminus: Secretory carrier-associated membrane protein 5 (291 aa).

The segment covering 1–10 (MGGRYDRNTF) has biased composition (basic and acidic residues). A disordered region spans residues 1-66 (MGGRYDRNTF…GSGAQDLKKK (66 aa)). Residues 1 to 126 (MGGRYDRNTF…EILVRLQRLQ (126 aa)) lie on the Cytoplasmic side of the membrane. Serine 34 carries the phosphoserine modification. Positions 58–94 (SGAQDLKKKEKELQAKEADLRRREQDLKRKQDAAARA) form a coiled coil. 4 consecutive transmembrane segments (helical) span residues 127–147 (YIAF…IIAV), 159–179 (IWLL…VLWY), 194–214 (FGWF…AAVA), and 242–262 (IFYF…IWVI). The Cytoplasmic portion of the chain corresponds to 263–288 (QQVYMYFRGSGKADDMRRDAARGAMR).

It belongs to the SCAMP family.

The protein localises to the cell membrane. Its subcellular location is the cytoplasmic vesicle. The protein resides in the secretory vesicle membrane. Its function is as follows. Probably involved in membrane trafficking. The polypeptide is Secretory carrier-associated membrane protein 5 (SCAMP5) (Arabidopsis thaliana (Mouse-ear cress)).